Here is a 102-residue protein sequence, read N- to C-terminus: MNQFYALFLVACIAAMANAYEEPDLDALAEFCGKESNRKYCDQIAQLATQHAIGINQEQVRMEKRKPSFVRFGKRSGYPLVIDDEEMRMDKRKPSFVRFGRK.

The first 19 residues, Met-1–Ala-19, serve as a signal peptide directing secretion. A propeptide spanning residues Tyr-20 to Glu-63 is cleaved from the precursor. Phe-72 bears the Phenylalanine amide mark. The propeptide occupies Arg-75–Asp-90. The residue at position 99 (Phe-99) is a Phenylalanine amide.

This sequence belongs to the FARP (FMRFamide related peptide) family. As to expression, each flp gene is expressed in a distinct set of neurons.

It is found in the secreted. Its function is as follows. FMRFamides and FMRFamide-like peptides are neuropeptides. KPSFVRF-amide: Has no effect on somatic body wall muscle, inhibits contraction of vaginal vera muscle, and inhibits the activity of the dissected pharyngeal myogenic muscle system. Acts as a ligand for the npr-22 receptor in vitro. This Caenorhabditis elegans protein is FMRFamide-like neuropeptides 9.